A 163-amino-acid polypeptide reads, in one-letter code: Peptidyl-prolyl cis-trans isomerase (163 aa).

One can recognise a PPIase cyclophilin-type domain in the interval 17–163 (KTAYATIKTN…IESVVFSSSL (147 aa)).

The protein belongs to the cyclophilin-type PPIase family.

It carries out the reaction [protein]-peptidylproline (omega=180) = [protein]-peptidylproline (omega=0). Its function is as follows. PPIases accelerate the folding of proteins. It catalyzes the cis-trans isomerization of proline imidic peptide bonds in oligopeptides. The polypeptide is Peptidyl-prolyl cis-trans isomerase (ppiA) (Helicobacter pylori (strain ATCC 700392 / 26695) (Campylobacter pylori)).